Here is a 432-residue protein sequence, read N- to C-terminus: MQFIKRTFPRRAFVDLLLNRFCLREFATTYSVSVSNARKLVRKRLLIADALKFKEQVNNLNEFRNKKTKSSLIRNDGFKLAKNVSSLLQKESLEKALHLLYERSNAKKTVAYNLVLQYHLAKGHYNAAWSLYNDMKKRQQKPSDHTYSILLKGFCDAIEKNKQGNFSKLREYSEKVTASALKESNNVTSNLHHIRIISKCSLKLKSMVLVSMIIPSIKQTLDFYSGSQILRLLNDFSMFNPEQREEVLKMGTNLWNYFVLECQKKGIAVDESLICSFVKLLATSNSPQVRNVGLNILTKVMGLEYQIFEDSNLRYPLPPYCDCTSRSLVTALQVIRQIQNGDLLARYWKYFEESHKFDLNLQVYHEKLRNLVQQGQAAECLNTIKRMSHNGPFPTQQTFLIVLSLCKRPKFYSYTKSFLDLAKKLNVPVEAT.

A mitochondrion-targeting transit peptide spans 1-33 (MQFIKRTFPRRAFVDLLLNRFCLREFATTYSVS). 4 PPR repeats span residues 108–142 (KTVAYNLVLQYHLAKGHYNAAWSLYNDMKKRQQKP), 143–179 (SDHTYSILLKGFCDAIEKNKQGNFSKLREYSEKVTAS), 360–394 (NLQVYHEKLRNLVQQGQAAECLNTIKRMSHNGPFP), and 395–429 (TQQTFLIVLSLCKRPKFYSYTKSFLDLAKKLNVPV).

It is found in the mitochondrion. Its function is as follows. Mitochondrial RNA-binding protein that acts as a general translation factor. Plays a critical role in the synthesis of all mitochondrial DNA-encoded oxidative phosphorylation subunits, which are essential for mitochondrial respiration. Essential for the expression of iron-sulfur cluster (ISC) proteins as well as other heme proteins related to iron-sensing, and thus plays a key role in iron homeostasis. The sequence is that of Pentatricopeptide repeat-containing protein 2, mitochondrial from Schizosaccharomyces pombe (strain 972 / ATCC 24843) (Fission yeast).